Reading from the N-terminus, the 500-residue chain is Glycogen synthase (500 aa).

Lys20 contacts ADP-alpha-D-glucose.

Belongs to the glycosyltransferase 1 family. Bacterial/plant glycogen synthase subfamily.

The catalysed reaction is [(1-&gt;4)-alpha-D-glucosyl](n) + ADP-alpha-D-glucose = [(1-&gt;4)-alpha-D-glucosyl](n+1) + ADP + H(+). Its pathway is glycan biosynthesis; glycogen biosynthesis. In terms of biological role, synthesizes alpha-1,4-glucan chains using ADP-glucose. The chain is Glycogen synthase from Desulforudis audaxviator (strain MP104C).